The primary structure comprises 155 residues: Arginine repressor (155 aa).

The protein belongs to the ArgR family.

It localises to the cytoplasm. It participates in amino-acid biosynthesis; L-arginine biosynthesis [regulation]. Functionally, regulates arginine biosynthesis genes. This Histophilus somni (strain 129Pt) (Haemophilus somnus) protein is Arginine repressor.